The following is a 274-amino-acid chain: 2-dehydro-3-deoxyphosphooctonate aldolase (274 aa).

This sequence belongs to the KdsA family.

The protein localises to the cytoplasm. The enzyme catalyses D-arabinose 5-phosphate + phosphoenolpyruvate + H2O = 3-deoxy-alpha-D-manno-2-octulosonate-8-phosphate + phosphate. The protein operates within carbohydrate biosynthesis; 3-deoxy-D-manno-octulosonate biosynthesis; 3-deoxy-D-manno-octulosonate from D-ribulose 5-phosphate: step 2/3. Its pathway is bacterial outer membrane biogenesis; lipopolysaccharide biosynthesis. The protein is 2-dehydro-3-deoxyphosphooctonate aldolase of Rickettsia canadensis (strain McKiel).